The chain runs to 403 residues: O-succinylhomoserine sulfhydrylase (403 aa).

Lys219 is modified (N6-(pyridoxal phosphate)lysine).

The protein belongs to the trans-sulfuration enzymes family. MetZ subfamily. In terms of assembly, homotetramer. Requires pyridoxal 5'-phosphate as cofactor.

The catalysed reaction is O-succinyl-L-homoserine + hydrogen sulfide = L-homocysteine + succinate. Its pathway is amino-acid biosynthesis; L-methionine biosynthesis via de novo pathway; L-homocysteine from O-succinyl-L-homoserine: step 1/1. Catalyzes the formation of L-homocysteine from O-succinyl-L-homoserine (OSHS) and hydrogen sulfide. Cannot use the other activated form of L-homoserine, O-acetyl-L-homoserine, as a substrate. The sequence is that of O-succinylhomoserine sulfhydrylase from Pseudomonas aeruginosa (strain ATCC 15692 / DSM 22644 / CIP 104116 / JCM 14847 / LMG 12228 / 1C / PRS 101 / PAO1).